The sequence spans 189 residues: Peptidyl-tRNA hydrolase (189 aa).

Tyrosine 17 is a tRNA binding site. The active-site Proton acceptor is the histidine 22. The tRNA site is built by phenylalanine 65, asparagine 67, and asparagine 113.

The protein belongs to the PTH family. Monomer.

The protein resides in the cytoplasm. It carries out the reaction an N-acyl-L-alpha-aminoacyl-tRNA + H2O = an N-acyl-L-amino acid + a tRNA + H(+). In terms of biological role, hydrolyzes ribosome-free peptidyl-tRNAs (with 1 or more amino acids incorporated), which drop off the ribosome during protein synthesis, or as a result of ribosome stalling. Catalyzes the release of premature peptidyl moieties from peptidyl-tRNA molecules trapped in stalled 50S ribosomal subunits, and thus maintains levels of free tRNAs and 50S ribosomes. This is Peptidyl-tRNA hydrolase from Mycoplasma genitalium (strain ATCC 33530 / DSM 19775 / NCTC 10195 / G37) (Mycoplasmoides genitalium).